A 763-amino-acid polypeptide reads, in one-letter code: Actin filament-associated protein 1-like 1 (763 aa).

A disordered region spans residues 83-137 (LQDMPEDEAESCKAASPEPAKSPSLRHTADLPPPLPNRPPPEDYYEEALPLGPGK). Phosphoserine occurs at positions 98, 104, and 153. The tract at residues 169–210 (TRMNGELKNSYNDSDAMSSSYESYDEEEEEGKGPQPTHQWPS) is disordered. Residues 175–185 (LKNSYNDSDAM) show a composition bias toward polar residues. The PH 1 domain occupies 220-316 (DCRICAFLLR…WLKVIREVSK (97 aa)). 2 positions are modified to phosphoserine: serine 329 and serine 343. The disordered stretch occupies residues 343-380 (SQEKQTSDSDSLGMGDSCSTLGREHGKGKKSSLSELKG). The PH 2 domain maps to 413–507 (EVPCCGYLNV…WLGLLLVEMG (95 aa)). The residue at position 552 (tyrosine 552) is a Phosphotyrosine. Residues 561 to 604 (QDEEPERPPGAQVKRHASTCSEKSHRVDPQVKVKRHASSAHQYK) form a disordered region. The span at 582–591 (EKSHRVDPQV) shows a compositional bias: basic and acidic residues. Residues 606–694 (GKNRAEEDAR…LVTVKERLQQ (89 aa)) adopt a coiled-coil conformation. The segment covering 712–724 (SGETANKPQNNVP) has biased composition (polar residues). The disordered stretch occupies residues 712–763 (SGETANKPQNNVPEQPLPVNCVSELRKRSPSIINSNQGRVLQKAKEWEMKKT). Residue serine 742 is modified to Phosphoserine. Positions 754-763 (KAKEWEMKKT) are enriched in basic and acidic residues.

Interacts with CTTN.

The protein resides in the cytoplasm. It is found in the cell projection. It localises to the podosome. The protein localises to the invadopodium. Its subcellular location is the cytoskeleton. The protein resides in the stress fiber. In terms of biological role, may be involved in podosome and invadosome formation. This chain is Actin filament-associated protein 1-like 1 (AFAP1L1), found in Bos taurus (Bovine).